A 338-amino-acid chain; its full sequence is Large ribosomal subunit protein uL10 (338 aa).

A disordered region spans residues 292–338 (LDDDLKERVSSTASAVEAKEEEAPKEEKEEEKEEEEEAPAAGLGMLF). A compositionally biased stretch (basic and acidic residues) spans 308–318 (EAKEEEAPKEE). Acidic residues predominate over residues 319-329 (KEEEKEEEEEA).

Belongs to the universal ribosomal protein uL10 family. In terms of assembly, part of the 50S ribosomal subunit. Forms part of the ribosomal stalk which helps the ribosome interact with GTP-bound translation factors. Forms a heptameric L10(L12)2(L12)2(L12)2 complex, where L10 forms an elongated spine to which the L12 dimers bind in a sequential fashion.

Forms part of the ribosomal stalk, playing a central role in the interaction of the ribosome with GTP-bound translation factors. This is Large ribosomal subunit protein uL10 from Methanococcus aeolicus (strain ATCC BAA-1280 / DSM 17508 / OCM 812 / Nankai-3).